The primary structure comprises 935 residues: Ribonuclease E (935 aa).

In terms of domain architecture, S1 motif spans 39 to 119 (ANIYKGKITR…GNKGAALTTF (81 aa)). Positions 302 and 345 each coordinate Mg(2+). Zn(2+)-binding residues include C403 and C406. A required for zinc-mediated homotetramerization and catalytic activity region spans residues 403–406 (CPRC). Disordered regions lie at residues 571-669 (TKSE…DLRK) and 698-743 (VQNN…KSPM). Basic and acidic residues-rich tracts occupy residues 593 to 625 (RSQD…ERNQ) and 701 to 719 (NDEK…ERQR). The span at 720–734 (RTPRHLRAANNQRRR) shows a compositional bias: basic residues.

The protein belongs to the RNase E/G family. RNase E subfamily. In terms of assembly, component of the RNA degradosome, which is a multiprotein complex involved in RNA processing and mRNA degradation. Within the RNA degradosome, RNase E assembles into a homotetramer formed by a dimer of dimers. It depends on Zn(2+) as a cofactor. Requires Mg(2+) as cofactor.

It is found in the cytoplasm. Its subcellular location is the cell inner membrane. The catalysed reaction is Endonucleolytic cleavage of single-stranded RNA in A- and U-rich regions.. In terms of biological role, endoribonuclease that plays a central role in RNA processing and decay. Required for the maturation of 5S and 16S rRNAs and the majority of tRNAs. Also involved in the degradation of most mRNAs. This chain is Ribonuclease E, found in Haemophilus influenzae (strain ATCC 51907 / DSM 11121 / KW20 / Rd).